The sequence spans 687 residues: Adhesion G-protein coupled receptor G1 (687 aa).

The first 25 residues, 1–25, serve as a signal peptide directing secretion; that stretch reads MTAQSLLQMTLFLLSLLFLVQGAHG. Residue 26–33 coordinates heparin; the sequence is RGHREDFR. Topologically, residues 26 to 402 are extracellular; the sequence is RGHREDFRFC…VEVDAVHKHY (377 aa). 2 cysteine pairs are disulfide-bonded: Cys-35-Cys-91 and Cys-121-Cys-177. N-linked (GlcNAc...) asparagine glycans are attached at residues Asn-39, Asn-148, and Asn-171. 190–200 lines the heparin pocket; the sequence is LKHPQKASRRP. The region spanning 224 to 395 is the GAIN-B domain; it reads DTVSFEEDRI…AVLMVSSVEV (172 aa). Residues Asn-234, Asn-303, Asn-324, and Asn-341 are each glycosylated (N-linked (GlcNAc...) asparagine). 2 disulfide bridges follow: Cys-346-Cys-377 and Cys-366-Cys-379. The tract at residues 346–395 is GPS; sequence CVFWVEDPTLSSPGHWSSAGCETVRRETQTSCFCNHLTYFAVLMVSSVEV. Residues 384–397 form a stachel region; it reads YFAVLMVSSVEVDA. The chain crosses the membrane as a helical span at residues 403–423; it reads LSLLSYVGCVISALACVVTIA. At 424–442 the chain is on the cytoplasmic side; that stretch reads AYLCSRRKPRDYTIKVHMN. Residues 443–463 form a helical membrane-spanning segment; the sequence is LLLAVFLLDMSFLLSEPVALT. At 464 to 470 the chain is on the extracellular side; the sequence is GSEAGCR. A helical transmembrane segment spans residues 471–491; it reads AGAIFLHFSLLACLSWMGLEG. The Cytoplasmic portion of the chain corresponds to 492–512; sequence YNLYRLVVEVFGTYVPGYLLK. A helical membrane pass occupies residues 513 to 533; it reads LSAMGWGFPIFLVTLVALVDV. Residues 534–570 are Extracellular-facing; sequence DNYGPIILAVHRTPESVIYPSMCWIRDSLVSYVTNLG. A helical transmembrane segment spans residues 571-591; the sequence is LFSLVFLFNMAMLGTMVVQIL. Over 592–603 the chain is Cytoplasmic; that stretch reads RLRPHTQKWSHV. A helical membrane pass occupies residues 604 to 624; sequence LTLLGLSLVLGLPWALIFFSF. Residues 625–630 lie on the Extracellular side of the membrane; that stretch reads ASGTFQ. Residues 631-651 form a helical membrane-spanning segment; sequence LVVLYLFSIITSFQGFLIFIW. Over 652-687 the chain is Cytoplasmic; the sequence is YWSMRLQARGGPSPLKSNSDSARLPISSGSTSSSRI. The segment at 664–687 is disordered; the sequence is SPLKSNSDSARLPISSGSTSSSRI. The segment covering 678 to 687 has biased composition (low complexity); the sequence is SSGSTSSSRI.

It belongs to the G-protein coupled receptor 2 family. LN-TM7 subfamily. As to quaternary structure, heterodimer of 2 chains generated by proteolytic processing; the large extracellular N-terminal fragment (ADGRG1 NT) and the membrane-bound C-terminal fragment (ADGRG1-CT) predominantly remain associated and non-covalently linked. ADGRG1 NT self-associates in a trans-trans manner; the homophilic interaction enhances receptor signaling. Interacts with TGM2. Interacts with heparin; leading to the reduction of ADGRG1 shedding. Interacts with COL3A1. Part of a GPCR-tetraspanin complex at least consisting of ADGRG1, CD81, eventually CD9, and GNA11 in which CD81 is enhancing the association of ADGRG1 with GNA11. Autoproteolytically cleaved into 2 fragments; the large extracellular N-terminal fragment (ADGRG1 NT) and the membrane-bound C-terminal fragment (ADGRG1 CT) predominantly remain associated and non-covalently linked. Shedding to yield the secreted ADGRG1 N-terminal fragment seems to involve metalloprotease(s). In terms of processing, ubiquitinated. Undergoes polyubiquitination upon activation.

It is found in the cell membrane. The protein localises to the secreted. The protein resides in the membrane raft. Forms a heterodimer of 2 chains generated by proteolytic processing that remain associated through non-covalent interactions mediated by the GAIN-B domain. In the inactivated receptor, the Stachel sequence (also named stalk) is embedded in the GAIN-B domain, where it adopts a beta-strand conformation. On activation, the Stachel moves into the 7 transmembrane region and adopts a twisted hook-shaped configuration that forms contacts within the receptor, leading to coupling of a G-alpha protein, which activates signaling. The cleaved GAIN-B and N-terminal domains can then dissociate from the rest of the receptor. In terms of biological role, adhesion G-protein coupled receptor (aGPCR) for steroid hormone 17alpha-hydroxypregnenolone (17-OH), which is involved in cell adhesion and cell-cell interactions. Ligand binding causes a conformation change that triggers signaling via guanine nucleotide-binding proteins (G proteins) and modulates the activity of downstream effectors, such as RhoA pathway. ADGRG1 is coupled to G(12) and/or G(13) G proteins (GNA12 and GNA13, respectively) and mediates the activation Rho small GTPases. Acts as a potent suppressor of ferroptosis: binding to 17-OH-binding initiates signaling that down-regulates CD36 and alleviates ferroptosis-induced liver injury. Ligand-binding also induces cell adhesion activity via association with proteins such as collagen III/COL3A1 and TGM2. Mediates cell matrix adhesion in developing neurons and hematopoietic stem cells. Involved in cortical development, specifically in maintenance of the pial basement membrane integrity and in cortical lamination: association with COL3A1 in the developing brain inhibits neuronal migration via activation of the RhoA pathway. Together with TGM2, acts as a regulator of myelination and myelin repair in oligodendrocyte precursor cells. Acts as a hemostatic sensor of shear force: G protein-coupled receptor signaling is activated in response to shear force in platelets, promoting G(13) G protein signaling, and platelet shape change and aggregation in a COL3A1-dependent manner. Acts as an inhibitor of VEGFA production thereby inhibiting angiogenesis through a signaling pathway mediated by PRKCA. Plays a role in the maintenance of hematopoietic stem cells in bone marrow niche. Plays an essential role in testis development. This is Adhesion G-protein coupled receptor G1 (ADGRG1) from Pongo pygmaeus (Bornean orangutan).